The sequence spans 121 residues: UPF0045 protein sll0230 (121 aa).

The protein belongs to the UPF0045 family.

This Synechocystis sp. (strain ATCC 27184 / PCC 6803 / Kazusa) protein is UPF0045 protein sll0230.